We begin with the raw amino-acid sequence, 1225 residues long: Hyphally regulated cell wall protein 4 (1225 aa).

The signal sequence occupies residues 1-20; that stretch reads MFSYSQAIRFIIFLLPICLT. Asparagine 97, asparagine 200, asparagine 488, asparagine 595, asparagine 634, and asparagine 694 each carry an N-linked (GlcNAc...) asparagine glycan. Residues 832-852 form a disordered region; that stretch reads DLDLPDDTTFTPSQSSSTTVP. Low complexity predominate over residues 838-852; the sequence is DTTFTPSQSSSTTVP. Residues asparagine 933 and asparagine 1035 are each glycosylated (N-linked (GlcNAc...) asparagine). Positions 1049 to 1114 are disordered; the sequence is AYTQQDASTQ…NSHFEGTFIS (66 aa). N-linked (GlcNAc...) asparagine glycans are attached at residues asparagine 1133, asparagine 1150, asparagine 1182, and asparagine 1193. Residue serine 1195 is the site of GPI-anchor amidated serine attachment. Positions 1196-1225 are cleaved as a propeptide — removed in mature form; the sequence is GLISKSESVVLLIRPVMIFVFLAICVVIML.

Belongs to the HYR1/IFF family. Post-translationally, the GPI-anchor is attached to the protein in the endoplasmic reticulum and serves to target the protein to the cell surface. There, the glucosamine-inositol phospholipid moiety is cleaved off and the GPI-modified mannoprotein is covalently attached via its lipidless GPI glycan remnant to the 1,6-beta-glucan of the outer cell wall layer.

The protein resides in the secreted. It localises to the cell wall. The protein localises to the membrane. Functionally, GPI-anchored cell wall protein involved in cell wall organization, hyphal growth, as well as in host-fungal interaction and virulence. The chain is Hyphally regulated cell wall protein 4 (HYR4) from Candida albicans (strain SC5314 / ATCC MYA-2876) (Yeast).